Consider the following 316-residue polypeptide: Cell division protein FtsQ (316 aa).

Residues 1–34 (MAKAARRTKSAPARRSPRRHARQTGATIRRPKRP) are disordered. Residues 1–61 (MAKAARRTKS…HPLLKQMAKR (61 aa)) lie on the Cytoplasmic side of the membrane. The chain crosses the membrane as a helical span at residues 62–80 (LLLILVIVGFLAGLWAARW). Residues 81–316 (PQLLATKTGE…AADPLVSDRI (236 aa)) are Periplasmic-facing. The region spanning 97 to 165 (FSVRHVEIVG…DTLVVDIVER (69 aa)) is the POTRA domain. The interval 295–316 (PEPVKKATKPAKAADPLVSDRI) is disordered.

The protein belongs to the FtsQ/DivIB family. FtsQ subfamily.

The protein resides in the cell inner membrane. Essential cell division protein. The chain is Cell division protein FtsQ from Zymomonas mobilis subsp. mobilis (strain ATCC 31821 / ZM4 / CP4).